A 315-amino-acid polypeptide reads, in one-letter code: Calumenin (315 aa).

The first 19 residues, Met-1–Ser-19, serve as a signal peptide directing secretion. Residue Tyr-47 is modified to Phosphotyrosine. Thr-65 is subject to Phosphothreonine. EF-hand domains follow at residues Glu-68–Arg-103, Trp-104–Asp-139, Gln-151–Asp-186, Met-188–Asn-223, Trp-229–Asp-264, and His-265–Ser-300. The residue at position 69 (Ser-69) is a Phosphoserine. Ca(2+) contacts are provided by Asp-81, Asp-83, Asp-85, Glu-92, Asp-117, Asn-119, Asp-121, and Glu-128. N-linked (GlcNAc...) asparagine glycosylation occurs at Asn-131. Residue Asp-164 participates in Ca(2+) binding. Position 165 is an N6-acetyllysine (Lys-165). Ca(2+) is bound by residues Asp-166, Asp-168, Glu-175, Asp-201, Asn-203, Asp-205, Glu-212, Asp-242, Asn-244, Asp-246, Arg-248, and Glu-253. Thr-254 carries the phosphothreonine modification. 2 positions are modified to phosphoserine: Ser-261 and Ser-277. Positions 278, 280, 282, 284, and 289 each coordinate Ca(2+). Residues His-312–Phe-315 carry the Prevents secretion from ER motif.

The protein belongs to the CREC family. As to quaternary structure, interacts with GGCX.

It is found in the endoplasmic reticulum membrane. The protein localises to the golgi apparatus. It localises to the secreted. Its subcellular location is the melanosome. The protein resides in the sarcoplasmic reticulum lumen. Functionally, involved in regulation of vitamin K-dependent carboxylation of multiple N-terminal glutamate residues. Seems to inhibit gamma-carboxylase GGCX. Binds 7 calcium ions with a low affinity. This chain is Calumenin (CALU), found in Mesocricetus auratus (Golden hamster).